We begin with the raw amino-acid sequence, 1062 residues long: Inactive tyrosine-protein kinase 7 (1062 aa).

Positions 1 to 22 (MGARPLTLLRALLLPLLAGAQA) are cleaved as a signal peptide. Ig-like C2-type domains follow at residues 23 to 112 (AIVF…ASFN), 120 to 210 (PVVL…FTLS), 217 to 309 (ARVV…EATL), 301 to 399 (PPIV…VNIT), 404 to 489 (PTWL…ARVQ), 495 to 578 (KFTP…HVQL), and 570 to 672 (GQIR…APLL). The Extracellular segment spans residues 23 to 696 (AIVFIKEPSS…SPPPYKMIQT (674 aa)). Residues cysteine 45 and cysteine 93 are joined by a disulfide bond. N-linked (GlcNAc...) asparagine glycans are attached at residues asparagine 98, asparagine 108, asparagine 176, asparagine 206, asparagine 260, and asparagine 275. Cysteine 142 and cysteine 192 are joined by a disulfide. 2 cysteine pairs are disulfide-bonded: cysteine 238-cysteine 293 and cysteine 335-cysteine 383. N-linked (GlcNAc...) asparagine glycosylation is found at asparagine 397, asparagine 455, asparagine 559, and asparagine 638. 3 cysteine pairs are disulfide-bonded: cysteine 425/cysteine 473, cysteine 516/cysteine 562, and cysteine 605/cysteine 656. Residues 697-717 (IGLSVGAAVAYIIAVLGLMFY) traverse the membrane as a helical segment. Over 718 to 1062 (CKKRCKAKRL…LGDSPADSKQ (345 aa)) the chain is Cytoplasmic. Disordered stretches follow at residues 728-750 (QKQP…QNGQ) and 1039-1062 (NPKD…DSKQ). Positions 786–1062 (ASLQPITTLG…LGDSPADSKQ (277 aa)) are interaction with CTNNB1. One can recognise a Protein kinase; inactive domain in the interval 788 to 1058 (LQPITTLGKS…IASTLGDSPA (271 aa)). A Phosphoserine modification is found at serine 1056.

This sequence belongs to the protein kinase superfamily. Tyr protein kinase family. Insulin receptor subfamily. As to quaternary structure, interacts with CTNNB1. Post-translationally, MMP14 cleaves PTK7 between Pro-613 and Leu-614 generating an N-terminal soluble (70 kDa) fragment and a membrane C-terminal (50 kDa) fragment. Proteolysis by MMP14 regulates PTK7 function in non-canonical Wnt signaling pathway. In terms of tissue distribution, expressed at high levels in lung and un-pregnant uterus among adult tissues, and in the tail, limbs, somites, gut and craniofacial regions among embryonic tissues.

It is found in the membrane. The protein resides in the cell junction. In terms of biological role, inactive tyrosine kinase involved in Wnt signaling pathway. Component of both the non-canonical (also known as the Wnt/planar cell polarity signaling) and the canonical Wnt signaling pathway. Functions in cell adhesion, cell migration, cell polarity, proliferation, actin cytoskeleton reorganization and apoptosis. Has a role in embryogenesis, epithelial tissue organization and angiogenesis. In Mus musculus (Mouse), this protein is Inactive tyrosine-protein kinase 7 (Ptk7).